The sequence spans 241 residues: ATP synthase subunit a (241 aa).

Helical transmembrane passes span 30–50 (GQVFLTSWILLGALLVFISLG), 91–111 (FIGTLFLFVFVSNWGGALIPW), 128–148 (INTTIALALLVSLSYFYAGLS), 193–213 (LVVGVLVFLVPLILPIPVMFL), and 214–234 (GLFTSAIQALIFATLAAYYIG).

Belongs to the ATPase A chain family. F-type ATPases have 2 components, CF(1) - the catalytic core - and CF(0) - the membrane proton channel. CF(1) has five subunits: alpha(3), beta(3), gamma(1), delta(1), epsilon(1). CF(0) has four main subunits: a, b, b' and c.

It is found in the cellular thylakoid membrane. Functionally, key component of the proton channel; it plays a direct role in the translocation of protons across the membrane. The chain is ATP synthase subunit a from Prochlorococcus marinus (strain MIT 9301).